The sequence spans 597 residues: Uptake hydrogenase large subunit (597 aa).

C75, C78, C576, and C579 together coordinate Ni(2+).

Belongs to the [NiFe]/[NiFeSe] hydrogenase large subunit family. Heterodimer of a large and a small subunit. Ni(2+) is required as a cofactor.

It is found in the cell membrane. It carries out the reaction H2 + A = AH2. Functionally, this enzyme recycles the H(2) produced by nitrogenase to increase the production of ATP and to protect nitrogenase against inhibition or damage by O(2) under carbon- or phosphate-limited conditions. This chain is Uptake hydrogenase large subunit (hupB), found in Rhodobacter capsulatus (Rhodopseudomonas capsulata).